Reading from the N-terminus, the 216-residue chain is CsgBAC operon transcriptional regulatory protein (216 aa).

The HTH luxR-type domain occupies 149-214 (NSTESALLTH…QAVSWANDNL (66 aa)). Positions 173 to 192 (NNEIARSLFISENTVKTHLY) form a DNA-binding region, H-T-H motif.

The protein localises to the cell inner membrane. In terms of biological role, the master regulator for adhesive curli fimbriae expression; necessary for transcription of the csgBAC/ymdA operon. Plays a positive role in biofilm formation. May have the capability to respond to starvation and/or high cell density by activating csgBA transcription. Low-level constitutive expression confers an adherent curli fimbriae-expressing phenotype, up-regulates 10 genes and down-regulates 14 others. The polypeptide is CsgBAC operon transcriptional regulatory protein (csgD) (Escherichia coli (strain K12)).